The following is a 333-amino-acid chain: N-acetyl-gamma-glutamyl-phosphate reductase (333 aa).

C145 is an active-site residue.

It belongs to the NAGSA dehydrogenase family. Type 1 subfamily.

Its subcellular location is the cytoplasm. The enzyme catalyses N-acetyl-L-glutamate 5-semialdehyde + phosphate + NADP(+) = N-acetyl-L-glutamyl 5-phosphate + NADPH + H(+). It functions in the pathway amino-acid biosynthesis; L-arginine biosynthesis; N(2)-acetyl-L-ornithine from L-glutamate: step 3/4. Its function is as follows. Catalyzes the NADPH-dependent reduction of N-acetyl-5-glutamyl phosphate to yield N-acetyl-L-glutamate 5-semialdehyde. The polypeptide is N-acetyl-gamma-glutamyl-phosphate reductase (Salinispora tropica (strain ATCC BAA-916 / DSM 44818 / JCM 13857 / NBRC 105044 / CNB-440)).